A 225-amino-acid chain; its full sequence is Phosphoserine phosphatase (225 aa).

N-acetylmethionine is present on Met1. The Nucleophile role is filled by Asp20. Positions 20 and 22 each coordinate Mg(2+). Residue 20-22 (DVD) participates in L-serine binding. Asp22 serves as the catalytic Proton donor. O-phospho-L-serine is bound at residue Met52. Gly53 is a binding site for phosphate. Residues 109–111 (SGG) and Lys158 each bind L-serine. O-phospho-L-serine is bound by residues 109–111 (SGG) and Lys158. Asp179 provides a ligand contact to Mg(2+). Thr182 provides a ligand contact to O-phospho-L-serine. Position 182 (Thr182) interacts with phosphate.

It belongs to the HAD-like hydrolase superfamily. SerB family. In terms of assembly, homodimer. Requires Mg(2+) as cofactor.

It is found in the cytoplasm. The protein localises to the cytosol. It catalyses the reaction O-phospho-L-serine + H2O = L-serine + phosphate. It carries out the reaction O-phospho-D-serine + H2O = D-serine + phosphate. It participates in amino-acid biosynthesis; L-serine biosynthesis; L-serine from 3-phospho-D-glycerate: step 3/3. Its function is as follows. Catalyzes the last irreversible step in the biosynthesis of L-serine from carbohydrates, the dephosphorylation of O-phospho-L-serine to L-serine. L-serine can then be used in protein synthesis, to produce other amino acids, in nucleotide metabolism or in glutathione synthesis, or can be racemized to D-serine, a neuromodulator. May also act on O-phospho-D-serine. The protein is Phosphoserine phosphatase of Mus musculus (Mouse).